Reading from the N-terminus, the 227-residue chain is Cytochrome c oxidase subunit 2 (227 aa).

Residues 1 to 14 (MAYPLQMGLQDATS) are Mitochondrial intermembrane-facing. The chain crosses the membrane as a helical span at residues 15-45 (PIMEELLHFHDHTLMIVFLISSLVLYIISLM). At 46 to 59 (LTTKLTHTSTMDAQ) the chain is on the mitochondrial matrix side. A helical transmembrane segment spans residues 60 to 87 (EVETVWTILPAIILILIALPSLRILYMM). Over 88-227 (DEINNPSLTV…HFEKWSTSML (140 aa)) the chain is Mitochondrial intermembrane. Cu cation-binding residues include His-161, Cys-196, Glu-198, Cys-200, His-204, and Met-207. Glu-198 contacts Mg(2+).

Belongs to the cytochrome c oxidase subunit 2 family. In terms of assembly, component of the cytochrome c oxidase (complex IV, CIV), a multisubunit enzyme composed of 14 subunits. The complex is composed of a catalytic core of 3 subunits MT-CO1, MT-CO2 and MT-CO3, encoded in the mitochondrial DNA, and 11 supernumerary subunits COX4I, COX5A, COX5B, COX6A, COX6B, COX6C, COX7A, COX7B, COX7C, COX8 and NDUFA4, which are encoded in the nuclear genome. The complex exists as a monomer or a dimer and forms supercomplexes (SCs) in the inner mitochondrial membrane with NADH-ubiquinone oxidoreductase (complex I, CI) and ubiquinol-cytochrome c oxidoreductase (cytochrome b-c1 complex, complex III, CIII), resulting in different assemblies (supercomplex SCI(1)III(2)IV(1) and megacomplex MCI(2)III(2)IV(2)). Found in a complex with TMEM177, COA6, COX18, COX20, SCO1 and SCO2. Interacts with TMEM177 in a COX20-dependent manner. Interacts with COX20. Interacts with COX16. It depends on Cu cation as a cofactor.

The protein localises to the mitochondrion inner membrane. It carries out the reaction 4 Fe(II)-[cytochrome c] + O2 + 8 H(+)(in) = 4 Fe(III)-[cytochrome c] + 2 H2O + 4 H(+)(out). Its function is as follows. Component of the cytochrome c oxidase, the last enzyme in the mitochondrial electron transport chain which drives oxidative phosphorylation. The respiratory chain contains 3 multisubunit complexes succinate dehydrogenase (complex II, CII), ubiquinol-cytochrome c oxidoreductase (cytochrome b-c1 complex, complex III, CIII) and cytochrome c oxidase (complex IV, CIV), that cooperate to transfer electrons derived from NADH and succinate to molecular oxygen, creating an electrochemical gradient over the inner membrane that drives transmembrane transport and the ATP synthase. Cytochrome c oxidase is the component of the respiratory chain that catalyzes the reduction of oxygen to water. Electrons originating from reduced cytochrome c in the intermembrane space (IMS) are transferred via the dinuclear copper A center (CU(A)) of subunit 2 and heme A of subunit 1 to the active site in subunit 1, a binuclear center (BNC) formed by heme A3 and copper B (CU(B)). The BNC reduces molecular oxygen to 2 water molecules using 4 electrons from cytochrome c in the IMS and 4 protons from the mitochondrial matrix. In Halichoerus grypus (Gray seal), this protein is Cytochrome c oxidase subunit 2 (MT-CO2).